The primary structure comprises 417 residues: Multifunctional CCA protein (417 aa).

Residues Gly8 and Arg11 each coordinate ATP. CTP is bound by residues Gly8 and Arg11. Mg(2+)-binding residues include Asp21 and Asp23. Residues Arg91, Arg137, and Arg140 each coordinate ATP. Arg91, Arg137, and Arg140 together coordinate CTP. Residues 225–326 (SGIHTLMTLQ…LNVLKKTDAF (102 aa)) form the HD domain.

Belongs to the tRNA nucleotidyltransferase/poly(A) polymerase family. Bacterial CCA-adding enzyme type 1 subfamily. Monomer. Can also form homodimers and oligomers. Mg(2+) serves as cofactor. Requires Ni(2+) as cofactor.

It catalyses the reaction a tRNA precursor + 2 CTP + ATP = a tRNA with a 3' CCA end + 3 diphosphate. The catalysed reaction is a tRNA with a 3' CCA end + 2 CTP + ATP = a tRNA with a 3' CCACCA end + 3 diphosphate. Catalyzes the addition and repair of the essential 3'-terminal CCA sequence in tRNAs without using a nucleic acid template. Adds these three nucleotides in the order of C, C, and A to the tRNA nucleotide-73, using CTP and ATP as substrates and producing inorganic pyrophosphate. tRNA 3'-terminal CCA addition is required both for tRNA processing and repair. Also involved in tRNA surveillance by mediating tandem CCA addition to generate a CCACCA at the 3' terminus of unstable tRNAs. While stable tRNAs receive only 3'-terminal CCA, unstable tRNAs are marked with CCACCA and rapidly degraded. The polypeptide is Multifunctional CCA protein (Neisseria meningitidis serogroup C (strain 053442)).